Reading from the N-terminus, the 590-residue chain is Negative elongation factor C/D (590 aa).

The tract at residues 16–43 (GSAAEWGDEADGGQQEDDSGEGEDDAEV) is disordered. A compositionally biased stretch (acidic residues) spans 21-43 (WGDEADGGQQEDDSGEGEDDAEV).

This sequence belongs to the NELF-D family. In terms of assembly, the NELF complex is composed of NELFA, NELFB, NELFCD (isoform NELF-C or isoform NELF-D) and NELFE; NELFA and NELFCD form a stable subcomplex that binds primarily through NELFCD to the N-terminus of NELFB. Binds RNA which may help to stabilize the NELF complex on nucleic acid. In vitro, the NELFA:NELFCD subcomplex binds to ssDNA and ssRNA in a sequence- and structure-dependent manner. Interacts with ARAF. Interacts with PCF11. Interacts with KAT8. In terms of tissue distribution, widely expressed. Expressed in heart, brain, lung, placenta, liver, skeletal and cardiac muscle, adrenal, thyroid, kidney and pancreas.

It is found in the nucleus. Essential component of the NELF complex, a complex that negatively regulates the elongation of transcription by RNA polymerase II. The NELF complex, which acts via an association with the DSIF complex and causes transcriptional pausing, is counteracted by the P-TEFb kinase complex. Functionally, (Microbial infection) The NELF complex is involved in HIV-1 latency possibly involving recruitment of PCF11 to paused RNA polymerase II. This Homo sapiens (Human) protein is Negative elongation factor C/D (NELFCD).